The primary structure comprises 347 residues: MCFFLSSLCPVVAERCRSLLVPEDSGVDVENGGKRTIPKSRNGMLGEDMDDAAPLESGLSMSDMQMGSFSTLKAAKRAEVGGTGPKVGRPRKLSVYNPREMSDGNPGEDCLVVGPSATVSHSEGLSASGKRRKQHLPFTVDDLDIMCGVPSPRSGAPCRQPLTCKSHSISSKRAVTGRRKPFDALLQDFKDNNSRKSQQADIPRPLATKVYCSGHSQRMRAVITSLYRESISGRSSLPQNEQTLALDANPQQQQQQHTLMSLNKVSECWWIWIKTPFCSGISMTQVRTTEGGDKVEVVLYAAAHLPAFTARRLSGYSLQRNQQAAHSGPIHVARSTLPFENPDFTGV.

Residues 1 to 13 form the signal peptide; sequence MCFFLSSLCPVVA. Residues 77–106 are disordered; that stretch reads RAEVGGTGPKVGRPRKLSVYNPREMSDGNP. Positions 134–201 constitute an SCA7 domain; it reads QHLPFTVDDL…NNSRKSQQAD (68 aa).

In Selaginella moellendorffii (Spikemoss), this protein is SCA7 domain-containing protein SELMODRAFT_439258.